The primary structure comprises 432 residues: Phosphomethylpyrimidine synthase (432 aa).

Residues N66, M95, Y124, H163, 185–187 (SRG), 226–229 (DGLR), and E265 each bind substrate. H269 contributes to the Zn(2+) binding site. Residue Y292 participates in substrate binding. H333 provides a ligand contact to Zn(2+). The [4Fe-4S] cluster site is built by C409, C412, and C416.

The protein belongs to the ThiC family. [4Fe-4S] cluster serves as cofactor.

The catalysed reaction is 5-amino-1-(5-phospho-beta-D-ribosyl)imidazole + S-adenosyl-L-methionine = 4-amino-2-methyl-5-(phosphooxymethyl)pyrimidine + CO + 5'-deoxyadenosine + formate + L-methionine + 3 H(+). The protein operates within cofactor biosynthesis; thiamine diphosphate biosynthesis. Catalyzes the synthesis of the hydroxymethylpyrimidine phosphate (HMP-P) moiety of thiamine from aminoimidazole ribotide (AIR) in a radical S-adenosyl-L-methionine (SAM)-dependent reaction. The protein is Phosphomethylpyrimidine synthase of Desulforamulus reducens (strain ATCC BAA-1160 / DSM 100696 / MI-1) (Desulfotomaculum reducens).